Consider the following 259-residue polypeptide: GTP-binding protein RHO4 (259 aa).

Glycine 59–threonine 66 contacts GTP. The short motif at tyrosine 81–tyrosine 89 is the Effector region element. Residues aspartate 107 to glutamine 111 and leucine 165 to aspartate 168 contribute to the GTP site. At cysteine 256 the chain carries Cysteine methyl ester. Residue cysteine 256 is the site of S-geranylgeranyl cysteine attachment. Residues valine 257 to leucine 259 constitute a propeptide, removed in mature form.

It belongs to the small GTPase superfamily. Rho family.

Its subcellular location is the cell membrane. In Eremothecium gossypii (strain ATCC 10895 / CBS 109.51 / FGSC 9923 / NRRL Y-1056) (Yeast), this protein is GTP-binding protein RHO4 (RHO4).